A 1239-amino-acid chain; its full sequence is DNA polymerase subunit gamma-1 (1239 aa).

The segment at 1-68 is disordered; it reads MSRLLWRKVA…PQVLSSEGGQ (68 aa). Composition is skewed to low complexity over residues 9-36 and 44-60; these read VAGATVGPGPVPAPGRWVSSSVPASDPS and QQQQQQQQQQQQPQQPQ. The does not contribute to polymerase and exonuclease enzymatic activities stretch occupies residues 43–55; that stretch reads QQQQQQQQQQQQQ. An Exo I motif is present at residues 196–200; sequence VFDVE. The Exonuclease activity role is filled by Asp198. The Exo II signature appears at 267–275; that stretch reads VGHNVSFDR. Ser306 is a binding site for DNA. The segment at 318-340 is disordered; it reads GKHKVQPPTKQGQKSQRKARRGP. The Exo III signature appears at 395–403; the sequence is YCAQDVWAT. A disordered region spans residues 506-531; the sequence is EPATASKLPIEGAGAPGDPMDQEDLG. Residues 510 to 571 are accessory-interacting determinant; it reads ASKLPIEGAG…RPQHLPGHPG (62 aa). Arg579 serves as a coordination point for RNA. Ser593 contributes to the DNA binding site. The RNA site is built by His754, Gly763, and Lys768. Lys806 and Thr849 together coordinate DNA. The tract at residues 858-864 is trigger loop; that stretch reads TWLTASN. 2 residues coordinate RNA: Ser863 and Arg869. The short motif at 887 to 896 is the Pol A element; it reads VGADVDSQEL. The a 2'-deoxyribonucleoside 5'-triphosphate site is built by Asp890, Val891, Ser893, Glu895, Arg943, Lys947, and Tyr951. Mg(2+) contacts are provided by Asp890 and Val891. Residues 943 to 958 carry the Pol B motif; sequence REHAKIFNYGRIYGAG. DNA contacts are provided by Thr1094 and Ser1095. The short motif at 1134–1141 is the Pol C element; that stretch reads HDEVRYLV. A 2'-deoxyribonucleoside 5'-triphosphate is bound at residue Asp1135. Asp1135 contacts Mg(2+).

This sequence belongs to the DNA polymerase type-A family. In terms of assembly, heterotrimer composed of a catalytic subunit and a homodimer of accessory subunits (POLG:POLG2). Interacts with TTC3. Interacts with LIG3. Requires Mg(2+) as cofactor.

The protein resides in the mitochondrion. It is found in the mitochondrion matrix. It localises to the mitochondrion nucleoid. It carries out the reaction DNA(n) + a 2'-deoxyribonucleoside 5'-triphosphate = DNA(n+1) + diphosphate. The catalysed reaction is a 3'-end 2'-deoxyribonucleotidyl-deoxyribonucleotide-DNA + H2O = a 3'-end 2'-deoxyribonucleotide-DNA + a 2'-deoxyribonucleoside 5'-phosphate + H(+). It catalyses the reaction a 5'-end 2'-deoxyribose-2'-deoxyribonucleotide-DNA = (2E,4S)-4-hydroxypenten-2-al-5-phosphate + a 5'-end 5'-phospho-2'-deoxyribonucleoside-DNA + H(+). Its activity is regulated as follows. Inhibited by dideoxynucleotides such as antiviral agent zalcitabine. Its function is as follows. Catalytic subunit of DNA polymerase gamma solely responsible for replication of mitochondrial DNA (mtDNA). Replicates both heavy and light strands of the circular mtDNA genome using a single-stranded DNA template, RNA primers and the four deoxyribonucleoside triphosphates as substrates. Has 5' -&gt; 3' polymerase activity. Functionally interacts with TWNK and SSBP1 at the replication fork to form a highly processive replisome, where TWNK unwinds the double-stranded DNA template prior to replication and SSBP1 covers the parental heavy strand to enable continuous replication of the entire mitochondrial genome. A single nucleotide incorporation cycle includes binding of the incoming nucleotide at the insertion site, a phosphodiester bond formation reaction that extends the 3'-end of the primer DNA, and translocation of the primer terminus to the post-insertion site. After completing replication of a mtDNA strand, mediates 3' -&gt; 5' exonucleolytic degradation at the nick to enable proper ligation. Highly accurate due to high nucleotide selectivity and 3' -&gt; 5' exonucleolytic proofreading. Proficiently corrects base substitutions, single-base additions and deletions in non-repetitive sequences and short repeats, but displays lower proofreading activity when replicating longer homopolymeric stretches. Exerts exonuclease activity toward single-stranded DNA and double-stranded DNA containing 3'-terminal mispairs. When a misincorporation occurs, transitions from replication to a pro-nucleolytic editing mode and removes the missincorporated nucleoside in the exonuclease active site. Proceeds via an SN2 nucleolytic mechanism in which Asp-198 catalyzes phosphodiester bond hydrolysis and Glu-200 stabilizes the leaving group. As a result the primer strand becomes one nucleotide shorter and is positioned in the post-insertion site, ready to resume DNA synthesis. Exerts 5'-deoxyribose phosphate (dRP) lyase activity and mediates repair-associated mtDNA synthesis (gap filling) in base-excision repair pathway. Catalyzes the release of the 5'-terminal 2-deoxyribose-5-phosphate sugar moiety from incised apurinic/apyrimidinic (AP) sites to produce a substrate for DNA ligase. The dRP lyase reaction does not require divalent metal ions and likely proceeds via a Schiff base intermediate in a beta-elimination reaction mechanism. The polypeptide is DNA polymerase subunit gamma-1 (Homo sapiens (Human)).